The following is a 329-amino-acid chain: MQFIDYAEIEVEGGKGGDGIVAFRREKYVPAGGPAGGNGGWGGSVIFVANSNLQTLLDFRYARRFKADDGKRGGPNNCTGANGKDCLVEVPCGTMVYNLETEEILGDLVENGQTLCVAAGGKGGLGNKHFLSNQNRAPDYALPGLEGEHRWLRLELKLLAEVGIIGLPNAGKSTLMASLSAARPKIADYPFTTLVPNLGVVRKPTGDGTVFADIPGLIEGAHEGIGLGHEFLRHIERTRLLLHLVDITSPDPVKDYQIIQQELEAYGRGLSDRPQIIALNKMDAADEETFLLIKNELTHLSSSPIIGISGVSRTGLEDLLQIVWQLLDS.

In terms of domain architecture, Obg spans M1–L159. One can recognise an OBG-type G domain in the interval A160–D328. Residues G166–S173, F191–V195, D213–G216, N280–D283, and S309–V311 each bind GTP. Mg(2+) contacts are provided by S173 and T193.

This sequence belongs to the TRAFAC class OBG-HflX-like GTPase superfamily. OBG GTPase family. In terms of assembly, monomer. Mg(2+) is required as a cofactor.

It localises to the cytoplasm. An essential GTPase which binds GTP, GDP and possibly (p)ppGpp with moderate affinity, with high nucleotide exchange rates and a fairly low GTP hydrolysis rate. Plays a role in control of the cell cycle, stress response, ribosome biogenesis and in those bacteria that undergo differentiation, in morphogenesis control. The sequence is that of GTPase Obg from Rippkaea orientalis (strain PCC 8801 / RF-1) (Cyanothece sp. (strain PCC 8801)).